Reading from the N-terminus, the 475-residue chain is Ribulose bisphosphate carboxylase large chain (475 aa).

Residues 1–2 constitute a propeptide that is removed on maturation; sequence MS. Position 3 is an N-acetylproline (proline 3). Lysine 14 bears the N6,N6,N6-trimethyllysine mark. Substrate-binding residues include asparagine 123 and threonine 173. Catalysis depends on lysine 175, which acts as the Proton acceptor. Lysine 177 lines the substrate pocket. Mg(2+) is bound by residues lysine 201, aspartate 203, and glutamate 204. At lysine 201 the chain carries N6-carboxylysine. Histidine 294 acts as the Proton acceptor in catalysis. Substrate-binding residues include arginine 295, histidine 327, and serine 379.

It belongs to the RuBisCO large chain family. Type I subfamily. Heterohexadecamer of 8 large chains and 8 small chains; disulfide-linked. The disulfide link is formed within the large subunit homodimers. The cofactor is Mg(2+). In terms of processing, the disulfide bond which can form in the large chain dimeric partners within the hexadecamer appears to be associated with oxidative stress and protein turnover.

The protein resides in the plastid. Its subcellular location is the chloroplast. It catalyses the reaction 2 (2R)-3-phosphoglycerate + 2 H(+) = D-ribulose 1,5-bisphosphate + CO2 + H2O. The enzyme catalyses D-ribulose 1,5-bisphosphate + O2 = 2-phosphoglycolate + (2R)-3-phosphoglycerate + 2 H(+). RuBisCO catalyzes two reactions: the carboxylation of D-ribulose 1,5-bisphosphate, the primary event in carbon dioxide fixation, as well as the oxidative fragmentation of the pentose substrate in the photorespiration process. Both reactions occur simultaneously and in competition at the same active site. The sequence is that of Ribulose bisphosphate carboxylase large chain from Piper cenocladum (Ant piper).